We begin with the raw amino-acid sequence, 115 residues long: OV39 antigen (115 aa).

The protein is OV39 antigen (OV39) of Onchocerca volvulus.